Reading from the N-terminus, the 106-residue chain is Iron-sulfur cluster assembly protein CyaY (106 aa).

The protein belongs to the frataxin family.

Functionally, involved in iron-sulfur (Fe-S) cluster assembly. May act as a regulator of Fe-S biogenesis. In Pectobacterium atrosepticum (strain SCRI 1043 / ATCC BAA-672) (Erwinia carotovora subsp. atroseptica), this protein is Iron-sulfur cluster assembly protein CyaY.